A 124-amino-acid polypeptide reads, in one-letter code: Fluoride-specific ion channel FluC 2 (124 aa).

4 helical membrane-spanning segments follow: residues 8–28, 34–54, 60–80, and 93–113; these read LPNQWNEMWLVAFGAVPGALV, NDLLVNVIGAAILGLVVGLPF, LLLGVGFCGSLTTFSSWMVEC, and LGLIGLTMGLGLGVAALGFLI. Na(+) contacts are provided by Gly68 and Thr71.

It belongs to the fluoride channel Fluc/FEX (TC 1.A.43) family.

The protein resides in the cell inner membrane. The enzyme catalyses fluoride(in) = fluoride(out). With respect to regulation, na(+) is not transported, but it plays an essential structural role and its presence is essential for fluoride channel function. In terms of biological role, fluoride-specific ion channel. Important for reducing fluoride concentration in the cell, thus reducing its toxicity. This is Fluoride-specific ion channel FluC 2 from Prochlorococcus marinus (strain MIT 9313).